A 213-amino-acid chain; its full sequence is Large ribosomal subunit protein uL1 (213 aa).

This sequence belongs to the universal ribosomal protein uL1 family. As to quaternary structure, part of the 50S ribosomal subunit.

In terms of biological role, binds directly to 23S rRNA. Probably involved in E site tRNA release. Protein L1 is also a translational repressor protein, it controls the translation of its operon by binding to its mRNA. This is Large ribosomal subunit protein uL1 from Methanocella arvoryzae (strain DSM 22066 / NBRC 105507 / MRE50).